Reading from the N-terminus, the 404-residue chain is MAEILERSGYLVKVRVEVPADRVKASYEALLKDLASRVRVPGFRPGKAPLKVVEARLGREALLQDLKERLVEETYPEAVRELGLSPVAARVVEQDLSEGEGFRYVAEVENYPEVRLPDWRSFALEVSPPEVTEEMVEKALEELRQRYAELVPVEREAQEKDHLFVRTEEGAEFPIDLAKALPHVREALLGKKAGDVVMVPVLNDKGEKVREVRTEVLEVKTLKLPELDEEFAKTLEAESLEDLKNRVRESLKRQAERAYEEARERAFLEKLAEGLEVEIPPSMLRAEERHLLEHLAEDLYRQGISLEAYLEALKVKGELEKFQEDLRKEAEKRVRIALAREKLAEELNPEVSEEEWQAYLQAAARAYGVSVQDLRRQFGEEGLARLKERLRQDKAVQEALKVLG.

Residues 160-225 (KDHLFVRTEE…VLEVKTLKLP (66 aa)) enclose the PPIase FKBP-type domain.

Belongs to the FKBP-type PPIase family. Tig subfamily.

The protein resides in the cytoplasm. It catalyses the reaction [protein]-peptidylproline (omega=180) = [protein]-peptidylproline (omega=0). Involved in protein export. Acts as a chaperone by maintaining the newly synthesized protein in an open conformation. Functions as a peptidyl-prolyl cis-trans isomerase. This chain is Trigger factor, found in Thermus thermophilus (strain ATCC BAA-163 / DSM 7039 / HB27).